The primary structure comprises 475 residues: Exodeoxyribonuclease I (475 aa).

The 180-residue stretch at 13–192 folds into the Exonuclease domain; that stretch reads FHDYETFGTH…AMADVYATIA (180 aa). Positions 15 and 17 each coordinate Mg(2+). Substrate-binding residues include Glu17 and Arg165. Mg(2+) is bound at residue Asp186. The 154-residue stretch at 202-355 folds into the ExoI SH3-like domain; that stretch reads PRLFDYLFTH…KVVAIFAEAE (154 aa). One can recognise an ExoI C-terminal domain in the interval 358–475; the sequence is TPSDNVDAQL…ALWQYAEEIV (118 aa).

As to quaternary structure, monomer. Interacts with ssb (via C-terminus); this interaction stimulates the exonuclease activity by recruiting the enzyme to its substrate. It depends on Mg(2+) as a cofactor.

It catalyses the reaction Exonucleolytic cleavage in the 3'- to 5'-direction to yield nucleoside 5'-phosphates.. With respect to regulation, inhibited by 10 mM EDTA. Degrades single-stranded DNA (ssDNA) in a highly processive manner. Also functions as a DNA deoxyribophosphodiesterase that releases deoxyribose-phosphate moieties following the cleavage of DNA at an apurinic/apyrimidinic (AP) site by either an AP endonuclease or AP lyase. The polypeptide is Exodeoxyribonuclease I (sbcB) (Escherichia coli (strain K12)).